A 138-amino-acid chain; its full sequence is Transcriptional activator protein (138 aa).

The segment covering 1 to 20 has biased composition (low complexity); the sequence is MTGSKKTPSTSPSKKLSSPP. The tract at residues 1 to 23 is disordered; that stretch reads MTGSKKTPSTSPSKKLSSPPEVK. The short motif at 23-37 is the Nuclear localization signal element; it reads KLRHRFAKRQIRRRR. A zinc finger lies at 42–59; it reads CGCSIYIHINCVNNGFTH. Residues 85–106 are compositionally biased toward polar residues; sequence NTASGDANVHTQPGISHSSQSK. The segment at 85 to 123 is disordered; it reads NTASGDANVHTQPGISHSSQSKPQHEDSVGSPQSLLQLP. The segment covering 113–123 has biased composition (low complexity); it reads VGSPQSLLQLP. A transactivation region spans residues 124-138; sequence SLDDVDDDFWADLLK.

This sequence belongs to the geminiviridae transcriptional activator protein family. Monomer. Homodimer. Homooligomer. Self-interaction correlates with nuclear localization and efficient activation of transcription. Monomers suppress local silencing by interacting with and inactivating host adenosine kinase 2 (ADK2) in the cytoplasm. Interacts with and inhibits host SNF1 kinase. Binds to ssDNA. Post-translationally, phosphorylated.

The protein resides in the host nucleus. It is found in the host cytoplasm. In terms of biological role, strong activator of the late viral genes promoters. Enhances the expression of the capsid protein and nuclear shuttle protein. Acts as a suppressor of RNA-mediated gene silencing, also known as post-transcriptional gene silencing (PTGS), a mechanism of plant viral defense that limits the accumulation of viral RNAs. Suppresses the host RNA silencing by inhibiting adenosine kinase 2 (ADK2), a kinase involved in a general methylation pathway. Also suppresses the host basal defense by interacting with and inhibiting SNF1 kinase, a key regulator of cell metabolism implicated in innate antiviral defense. Determines pathogenicity. The sequence is that of Transcriptional activator protein from Pepper huasteco yellow vein virus (PHYVV).